The primary structure comprises 420 residues: Glycogen synthase kinase-3 beta (420 aa).

The segment covering 1-24 has biased composition (polar residues); it reads MSGRPRTTSFAESCKPVQQPSSFG. Residues 1-50 form a disordered region; that stretch reads MSGRPRTTSFAESCKPVQQPSSFGSMKVSRDKDGSKVTTVVATPGQGPDR. A Protein kinase domain is found at 56-340; sequence YTDTKVIGNG…PLDACAHSFF (285 aa). ATP is bound by residues 62-70 and K85; that span reads IGNGSFGVV. D181 (proton acceptor) is an active-site residue. Residues 384–420 are disordered; the sequence is NQAAVSTTSNTTSTSDSNTGERGSTNNAASASASNSS. 2 stretches are compositionally biased toward low complexity: residues 389–401 and 409–420; these read STTS…SDSN and NNAASASASNSS.

The protein belongs to the protein kinase superfamily. CMGC Ser/Thr protein kinase family. GSK-3 subfamily. Phosphorylated. Activated by phosphorylation at Tyr-216.

It is found in the cytoplasm. The protein resides in the nucleus. The protein localises to the cell membrane. It carries out the reaction L-seryl-[tau protein] + ATP = O-phospho-L-seryl-[tau protein] + ADP + H(+). The catalysed reaction is L-threonyl-[tau protein] + ATP = O-phospho-L-threonyl-[tau protein] + ADP + H(+). In terms of biological role, plays a role in the organization of the formation of the main body axis of developing embryo. Acts as an inhibitor of differentiation of primary neurons. Inhibits the ability of ectopically expressed NEUROD1 and other bHLH factors to promote early retinal cell differentiation. May participate in the Wnt signaling pathway. May regulate the circadian clock via phosphorylation of the major clock components. The chain is Glycogen synthase kinase-3 beta (gsk3b) from Xenopus laevis (African clawed frog).